Here is a 397-residue protein sequence, read N- to C-terminus: Riboflavin biosynthesis protein RibBA (397 aa).

The tract at residues 1–199 (MFHRIEEALE…IEDLIAYRRH (199 aa)) is DHBP synthase. D-ribulose 5-phosphate is bound by residues 26 to 27 (RE), D31, 138 to 142 (RAGHT), and E162. E27 is a Mg(2+) binding site. Residue H141 participates in Mg(2+) binding. A GTP cyclohydrolase II region spans residues 200–397 (HETLVTREVE…VNKLGHLLNL (198 aa)). 250–254 (RVHSE) lines the GTP pocket. Residues C255, C266, and C268 each contribute to the Zn(2+) site. GTP-binding positions include Q271, 293–295 (EGR), and T315. D327 (proton acceptor; for GTP cyclohydrolase activity) is an active-site residue. The Nucleophile; for GTP cyclohydrolase activity role is filled by R329. GTP contacts are provided by T350 and K355.

This sequence in the N-terminal section; belongs to the DHBP synthase family. The protein in the C-terminal section; belongs to the GTP cyclohydrolase II family. It depends on Mg(2+) as a cofactor. Mn(2+) is required as a cofactor. Zn(2+) serves as cofactor.

It carries out the reaction D-ribulose 5-phosphate = (2S)-2-hydroxy-3-oxobutyl phosphate + formate + H(+). The enzyme catalyses GTP + 4 H2O = 2,5-diamino-6-hydroxy-4-(5-phosphoribosylamino)-pyrimidine + formate + 2 phosphate + 3 H(+). It functions in the pathway cofactor biosynthesis; riboflavin biosynthesis; 2-hydroxy-3-oxobutyl phosphate from D-ribulose 5-phosphate: step 1/1. Its pathway is cofactor biosynthesis; riboflavin biosynthesis; 5-amino-6-(D-ribitylamino)uracil from GTP: step 1/4. Its function is as follows. Catalyzes the conversion of D-ribulose 5-phosphate to formate and 3,4-dihydroxy-2-butanone 4-phosphate. Catalyzes the conversion of GTP to 2,5-diamino-6-ribosylamino-4(3H)-pyrimidinone 5'-phosphate (DARP), formate and pyrophosphate. The chain is Riboflavin biosynthesis protein RibBA from Bacillus cereus (strain AH187).